The primary structure comprises 1358 residues: Nonribosomal peptide synthetase rstn8 (1358 aa).

Residues 1-23 form a disordered region; sequence MSHSSHYSPVDSGMVPSSSSTED. Positions 261–659 are adenylation; sequence YRELDRLSSR…LGEVEYRLHQ (399 aa). The Carrier domain maps to 795–872; sequence ETVSPAESTL…DQASLVRPLV (78 aa). Ser832 carries the O-(pantetheine 4'-phosphoryl)serine modification. Residues 909-1322 are condensation; the sequence is EDIYPCTPLQ…DDYSQALHEL (414 aa).

Belongs to the NRP synthetase family. Pantetheine 4'-phosphate serves as cofactor.

The catalysed reaction is restrictinol + glycine + H(+) = restricticin + H2O. It participates in antifungal biosynthesis. Nonribosomal peptide synthetase; part of the gene cluster that mediates the biosynthesis of the tetrahydropyranyl antifungal agent restricticin that acts as an inhibitor of CYP51 and blocks the ergosterol biosynthesis. Within the pathway, rstn8 catalyzes the C3 esterification of restrictinol with glycine to yield restricticin. Rstn8 represents an example of the emerging class of single-module NRPS-like enzymes that perform esterification reactions. Rstn8 displays strict substrate specificity toward glycine as no other natural amino acid is accepted. Rstn8 does not recognize desmethylrestrictinol as a substrate, demonstrating that rstn1-catalyzed methylation, possibly protecting the C4-OH, must precede the final esterification step. The highly reducing polyketide synthase rstn3, the short chain dehydrogenase rstn4, the cyclase rstn5, the FAD-dependent monooxygenase rstn6 and the enoylreductase rstn7 are required to generate the first stable intermediate desmethylrestrictinol. Rstn3 with rstn7 biosynthesize the first polyketide chain intermediate that is reduced by rstn4, followed by epoxidation by rstn6 before 6-endo cyclization via epoxide opening by rstn5 leads to desmethylrestrictinol. The methyltransferase rstn1 then catalyzes the C4 O-methylation of desmethylrestrictinol to produce restrictinol, and the nonribosomal peptide synthetase rstn8 catalyzes the C3 esterification of restrictinol with glycine that leads to restricticin. The polypeptide is Nonribosomal peptide synthetase rstn8 (Aspergillus nomiae NRRL (strain ATCC 15546 / NRRL 13137 / CBS 260.88 / M93)).